Reading from the N-terminus, the 124-residue chain is Small ribosomal subunit protein uS13c (124 aa).

The segment at Gly100–Arg124 is disordered. A compositionally biased stretch (basic residues) spans Gln101 to Arg124.

Belongs to the universal ribosomal protein uS13 family. In terms of assembly, part of the 30S ribosomal subunit.

The protein resides in the plastid. The protein localises to the chloroplast. Located at the top of the head of the 30S subunit, it contacts several helices of the 16S rRNA. This chain is Small ribosomal subunit protein uS13c, found in Emiliania huxleyi (Coccolithophore).